We begin with the raw amino-acid sequence, 487 residues long: L-tartrate/succinate antiporter (487 aa).

Transmembrane regions (helical) follow at residues 10 to 30 (YLAP…AGLE), 33 to 53 (TWLY…EPVP), 54 to 74 (GAVV…WLLF), 93 to 113 (WAVF…FMFG), 137 to 157 (TLFL…VTPS), 189 to 209 (IGSY…AIFL), 236 to 256 (FLGM…LAYV), 292 to 312 (LMVG…AAMV), 313 to 333 (GYSV…DIVS), 340 to 360 (VFFW…TGFI), 370 to 390 (SLSG…FYLL), 393 to 413 (FFAS…AAAL), 418 to 438 (IPLP…SILT), and 465 to 485 (IFGL…MPVV).

The protein belongs to the SLC13A/DASS transporter (TC 2.A.47) family. DIT1 subfamily.

It is found in the cell inner membrane. The enzyme catalyses (2R,3R)-tartrate(out) + succinate(in) = (2R,3R)-tartrate(in) + succinate(out). In terms of biological role, catalyzes the uptake of tartrate in exchange for intracellular succinate. Essential for anaerobic L-tartrate fermentation. This chain is L-tartrate/succinate antiporter (ttdT), found in Shigella boydii serotype 4 (strain Sb227).